A 265-amino-acid polypeptide reads, in one-letter code: Tryptophan synthase alpha chain (265 aa).

Residues E48 and D59 each act as proton acceptor in the active site.

Belongs to the TrpA family. In terms of assembly, tetramer of two alpha and two beta chains.

It carries out the reaction (1S,2R)-1-C-(indol-3-yl)glycerol 3-phosphate + L-serine = D-glyceraldehyde 3-phosphate + L-tryptophan + H2O. Its pathway is amino-acid biosynthesis; L-tryptophan biosynthesis; L-tryptophan from chorismate: step 5/5. The alpha subunit is responsible for the aldol cleavage of indoleglycerol phosphate to indole and glyceraldehyde 3-phosphate. The chain is Tryptophan synthase alpha chain from Ruthia magnifica subsp. Calyptogena magnifica.